Consider the following 36-residue polypeptide: Pancreatic polypeptide (36 aa).

Phenylalanine amide is present on F36.

It belongs to the NPY family.

The protein resides in the secreted. Hormone secreted by pancreatic cells that acts as a regulator of pancreatic and gastrointestinal functions. This chain is Pancreatic polypeptide (ppy), found in Aquarana catesbeiana (American bullfrog).